A 333-amino-acid chain; its full sequence is Ketol-acid reductoisomerase (NADP(+)) (333 aa).

In terms of domain architecture, KARI N-terminal Rossmann spans 1-179 (MFYDDDADLT…GGTRAGVIKT (179 aa)). Residues 22–25 (YGSQ), lysine 45, serine 48, serine 50, and 80–83 (DTAQ) each bind NADP(+). Histidine 105 is an active-site residue. NADP(+) is bound at residue glycine 131. Residues 180-325 (TFKDETETDL…KRLRDLMSWV (146 aa)) enclose the KARI C-terminal knotted domain. Positions 188, 192, 224, and 228 each coordinate Mg(2+). Serine 249 lines the substrate pocket.

Belongs to the ketol-acid reductoisomerase family. It depends on Mg(2+) as a cofactor.

It carries out the reaction (2R)-2,3-dihydroxy-3-methylbutanoate + NADP(+) = (2S)-2-acetolactate + NADPH + H(+). The enzyme catalyses (2R,3R)-2,3-dihydroxy-3-methylpentanoate + NADP(+) = (S)-2-ethyl-2-hydroxy-3-oxobutanoate + NADPH + H(+). Its pathway is amino-acid biosynthesis; L-isoleucine biosynthesis; L-isoleucine from 2-oxobutanoate: step 2/4. It participates in amino-acid biosynthesis; L-valine biosynthesis; L-valine from pyruvate: step 2/4. In terms of biological role, involved in the biosynthesis of branched-chain amino acids (BCAA). Catalyzes an alkyl-migration followed by a ketol-acid reduction of (S)-2-acetolactate (S2AL) to yield (R)-2,3-dihydroxy-isovalerate. In the isomerase reaction, S2AL is rearranged via a Mg-dependent methyl migration to produce 3-hydroxy-3-methyl-2-ketobutyrate (HMKB). In the reductase reaction, this 2-ketoacid undergoes a metal-dependent reduction by NADPH to yield (R)-2,3-dihydroxy-isovalerate. The polypeptide is Ketol-acid reductoisomerase (NADP(+)) (Mycobacterium avium (strain 104)).